A 193-amino-acid polypeptide reads, in one-letter code: dTTP/UTP pyrophosphatase (193 aa).

The active-site Proton acceptor is the aspartate 75.

It belongs to the Maf family. YhdE subfamily. Requires a divalent metal cation as cofactor.

It is found in the cytoplasm. It catalyses the reaction dTTP + H2O = dTMP + diphosphate + H(+). The catalysed reaction is UTP + H2O = UMP + diphosphate + H(+). Functionally, nucleoside triphosphate pyrophosphatase that hydrolyzes dTTP and UTP. May have a dual role in cell division arrest and in preventing the incorporation of modified nucleotides into cellular nucleic acids. The protein is dTTP/UTP pyrophosphatase of Chlorobium phaeovibrioides (strain DSM 265 / 1930) (Prosthecochloris vibrioformis (strain DSM 265)).